The sequence spans 917 residues: Gamma-tubulin complex component 3 (917 aa).

Belongs to the TUBGCP family. In terms of assembly, gamma-tubulin small complex (Gamma TuSC) is a heterotetrameric complex which contains two molecules of gamma-tubulin, and one molecule each of Dgrip84 and Dgrip91. The gamma-tubulin in this complex binds preferentially to GDP over GTP.

It is found in the cytoplasm. It localises to the cytoskeleton. Its subcellular location is the microtubule organizing center. The protein localises to the centrosome. The protein resides in the perinuclear region. The sequence is that of Gamma-tubulin complex component 3 from Drosophila melanogaster (Fruit fly).